The primary structure comprises 89 residues: Large ribosomal subunit protein bL27 (89 aa).

The protein belongs to the bacterial ribosomal protein bL27 family.

The protein is Large ribosomal subunit protein bL27 of Cereibacter sphaeroides (strain ATCC 17029 / ATH 2.4.9) (Rhodobacter sphaeroides).